A 208-amino-acid chain; its full sequence is Protein-L-isoaspartate O-methyltransferase (208 aa).

The active site involves Ser-59.

It belongs to the methyltransferase superfamily. L-isoaspartyl/D-aspartyl protein methyltransferase family.

It localises to the cytoplasm. It carries out the reaction [protein]-L-isoaspartate + S-adenosyl-L-methionine = [protein]-L-isoaspartate alpha-methyl ester + S-adenosyl-L-homocysteine. In terms of biological role, catalyzes the methyl esterification of L-isoaspartyl residues in peptides and proteins that result from spontaneous decomposition of normal L-aspartyl and L-asparaginyl residues. It plays a role in the repair and/or degradation of damaged proteins. This chain is Protein-L-isoaspartate O-methyltransferase, found in Escherichia coli O1:K1 / APEC.